A 72-amino-acid polypeptide reads, in one-letter code: uncharacterized protein (72 aa).

The segment at M1–S53 is disordered.

This is an uncharacterized protein from Dictyostelium discoideum (Social amoeba).